The sequence spans 211 residues: uncharacterized protein (211 aa).

4 consecutive transmembrane segments (helical) span residues 77-97 (FLMF…AITI), 113-133 (GISV…VLIG), 152-172 (ILIS…NVIP), and 179-199 (LLTP…PLFG).

It is found in the cell membrane. This is an uncharacterized protein from Bacillus subtilis (strain 168).